A 352-amino-acid polypeptide reads, in one-letter code: Protein RecA (352 aa).

67-74 (GPESSGKT) lines the ATP pocket.

Belongs to the RecA family.

It localises to the cytoplasm. Its function is as follows. Can catalyze the hydrolysis of ATP in the presence of single-stranded DNA, the ATP-dependent uptake of single-stranded DNA by duplex DNA, and the ATP-dependent hybridization of homologous single-stranded DNAs. It interacts with LexA causing its activation and leading to its autocatalytic cleavage. This is Protein RecA from Klebsiella pneumoniae subsp. pneumoniae (strain ATCC 700721 / MGH 78578).